Reading from the N-terminus, the 783-residue chain is B-cell scaffold protein with ankyrin repeats (783 aa).

Positions Met-1 to Leu-154 are interaction with ITPR2. In terms of domain architecture, TIR spans Asn-25–Ile-153. The DBB domain occupies Val-199 to Leu-326. ANK repeat units follow at residues Glu-341–Ala-370 and Asp-377–Arg-407. Disordered regions lie at residues Phe-422–Gln-521, Met-538–Glu-586, Ser-604–Glu-624, and Arg-641–Asp-670. Basic and acidic residues predominate over residues Arg-444–Ser-479. Residues His-505 to Pro-515 are compositionally biased toward pro residues. Positions Ala-549 to Glu-565 are enriched in basic and acidic residues. The segment covering Ala-566–Glu-586 has biased composition (acidic residues). Residues Pro-610–Ile-620 are compositionally biased toward pro residues. A compositionally biased stretch (basic and acidic residues) spans Arg-641–Met-660. Tyr-649 carries the phosphotyrosine modification.

In terms of assembly, interacts with LYN, ITPR1 and ITPR2. Phosphorylated on tyrosines upon BCR activation. In terms of tissue distribution, specifically expressed in spleen. Highly expressed in immature B-cells and recirculating B-cells, and at low levels in pro-B and pre-B cells.

Involved in B-cell receptor (BCR)-induced Ca(2+) mobilization from intracellular stores. Promotes Lyn-mediated phosphorylation of IP3 receptors 1 and 2. The polypeptide is B-cell scaffold protein with ankyrin repeats (Bank1) (Mus musculus (Mouse)).